Here is a 406-residue protein sequence, read N- to C-terminus: MAAAVRQDLAQLMNSSGSHKDLAGKYRQILEKAIQLSGTEQLEALKAFVEAMVNENVSLVISRQLLTDFCTHLPNLPDSTAKEVYHFTLEKVQPRVISFEEQVASIRQRLASIYEKEEDWRNAAQVLVGIPLETGQKQYNVDYKLETYLKIARLYLEDDDPVQAEAYINRASLLQNESTNEQLQIHYKVCYARVLDYRRKFIEAAQRYNELSYKTIVHESERLEALKHALHCTILASAGQQRSRMLATLFKDERCQQLAAYGILEKMYLDRIIRGNQLQEFAAMLMPHQKATTADGSSILDRAVIEHNLLSASKLYNNITFEELGALLEIPAAKAEKIASQMITEGRMNGFIDQIDGIVHFETREALPTWDKQIQSLCFQVNNLLEKISQTAPEWTAQAMEAQMAQ.

The residue at position 2 (A2) is an N-acetylalanine. K25 carries the N6-acetyllysine modification. The region spanning 197–366 is the PCI domain; the sequence is YRRKFIEAAQ…GIVHFETREA (170 aa).

This sequence belongs to the CSN4 family. In terms of assembly, component of the CSN complex, composed of COPS1/GPS1, COPS2, COPS3, COPS4, COPS5, COPS6, COPS7 (COPS7A or COPS7B), COPS8 and COPS9. In the complex, it probably interacts directly with COPS1, COPS2, COPS3, COPS5, COPS6, COPS7 (COPS7A or COPS7B) and COPS8. Interacts with TOR1A; the interaction is direct and associates TOR1A and SNAPIN with the CSN complex. Interacts with STON2; controls STON2 neddylation levels. Interacts with ERCC6.

The protein localises to the cytoplasm. Its subcellular location is the nucleus. It is found in the cytoplasmic vesicle. The protein resides in the secretory vesicle. It localises to the synaptic vesicle. In terms of biological role, component of the COP9 signalosome complex (CSN), a complex involved in various cellular and developmental processes. The CSN complex is an essential regulator of the ubiquitin (Ubl) conjugation pathway by mediating the deneddylation of the cullin subunits of SCF-type E3 ligase complexes, leading to decrease the Ubl ligase activity of SCF-type complexes such as SCF, CSA or DDB2. Also involved in the deneddylation of non-cullin subunits such as STON2. The complex is also involved in phosphorylation of p53/TP53, c-jun/JUN, IkappaBalpha/NFKBIA, ITPK1, IRF8/ICSBP and SNAPIN, possibly via its association with CK2 and PKD kinases. CSN-dependent phosphorylation of TP53 and JUN promotes and protects degradation by the Ubl system, respectively. This is COP9 signalosome complex subunit 4 (Cops4) from Rattus norvegicus (Rat).